We begin with the raw amino-acid sequence, 307 residues long: Protoheme IX farnesyltransferase (307 aa).

The next 8 membrane-spanning stretches (helical) occupy residues 32–52 (MGIV…ALHF), 65–85 (FFTI…NNYI), 108–128 (PGFA…FLLL), 131–151 (PMAV…YSLW), 158–178 (LNTV…WAAI), 186–206 (IAWM…LALA), 251–271 (LGIT…VLGF), and 287–307 (FVYS…VTFF).

Belongs to the UbiA prenyltransferase family. Protoheme IX farnesyltransferase subfamily. As to quaternary structure, interacts with CtaA.

The protein localises to the cell membrane. It catalyses the reaction heme b + (2E,6E)-farnesyl diphosphate + H2O = Fe(II)-heme o + diphosphate. Its pathway is porphyrin-containing compound metabolism; heme O biosynthesis; heme O from protoheme: step 1/1. In terms of biological role, converts heme B (protoheme IX) to heme O by substitution of the vinyl group on carbon 2 of heme B porphyrin ring with a hydroxyethyl farnesyl side group. This Bacillus cereus (strain ATCC 10987 / NRS 248) protein is Protoheme IX farnesyltransferase.